The primary structure comprises 456 residues: tRNA-2-methylthio-N(6)-dimethylallyladenosine synthase (456 aa).

One can recognise an MTTase N-terminal domain in the interval 19–136 (LTFNVQTFGC…LAELIYARHT (118 aa)). Cys-28, Cys-63, Cys-97, Cys-173, Cys-177, and Cys-180 together coordinate [4Fe-4S] cluster. The region spanning 159–389 (QKYKFKAGVN…LTTIRESSSK (231 aa)) is the Radical SAM core domain. Residues 392–455 (KDDEGKIAEV…GFYYMGEMME (64 aa)) form the TRAM domain.

The protein belongs to the methylthiotransferase family. MiaB subfamily. As to quaternary structure, monomer. Requires [4Fe-4S] cluster as cofactor.

It is found in the cytoplasm. It carries out the reaction N(6)-dimethylallyladenosine(37) in tRNA + (sulfur carrier)-SH + AH2 + 2 S-adenosyl-L-methionine = 2-methylsulfanyl-N(6)-dimethylallyladenosine(37) in tRNA + (sulfur carrier)-H + 5'-deoxyadenosine + L-methionine + A + S-adenosyl-L-homocysteine + 2 H(+). Functionally, catalyzes the methylthiolation of N6-(dimethylallyl)adenosine (i(6)A), leading to the formation of 2-methylthio-N6-(dimethylallyl)adenosine (ms(2)i(6)A) at position 37 in tRNAs that read codons beginning with uridine. This chain is tRNA-2-methylthio-N(6)-dimethylallyladenosine synthase, found in Lachnoclostridium phytofermentans (strain ATCC 700394 / DSM 18823 / ISDg) (Clostridium phytofermentans).